Here is a 349-residue protein sequence, read N- to C-terminus: Probable tRNA pseudouridine synthase B (349 aa).

Asp-41 functions as the Nucleophile in the catalytic mechanism. The PUA domain maps to 207 to 279; that stretch reads YPKVIVKETA…KVIDIDNVLI (73 aa). The segment covering 300–309 has biased composition (basic and acidic residues); that stretch reads IPVQKPERKL. The interval 300-349 is disordered; sequence IPVQKPERKLHGNLQGSQEWKDTGNRGNPKRGGTGSKGFSSGFRKRKAKR.

It belongs to the pseudouridine synthase TruB family. Type 2 subfamily.

It catalyses the reaction uridine(55) in tRNA = pseudouridine(55) in tRNA. Could be responsible for synthesis of pseudouridine from uracil-55 in the psi GC loop of transfer RNAs. This Picrophilus torridus (strain ATCC 700027 / DSM 9790 / JCM 10055 / NBRC 100828 / KAW 2/3) protein is Probable tRNA pseudouridine synthase B.